Reading from the N-terminus, the 658-residue chain is UvrABC system protein B (658 aa).

The 389-residue stretch at 26–414 folds into the Helicase ATP-binding domain; it reads AGLKKGLKHQ…PDVIEQIIRP (389 aa). Residue 39 to 46 coordinates ATP; it reads GATGTGKT. The Beta-hairpin signature appears at 92 to 115; it reads YYDYYQPEAYVPQSDTYIEKDASI. The 163-residue stretch at 430–592 folds into the Helicase C-terminal domain; that stretch reads QIDDLMDEIN…ITPKTIKKEI (163 aa). One can recognise a UVR domain in the interval 622 to 658; sequence DVFIEGMEHEMKEAAKALDFERAAELRDALLEIKAEG.

This sequence belongs to the UvrB family. In terms of assembly, forms a heterotetramer with UvrA during the search for lesions. Interacts with UvrC in an incision complex.

The protein localises to the cytoplasm. The UvrABC repair system catalyzes the recognition and processing of DNA lesions. A damage recognition complex composed of 2 UvrA and 2 UvrB subunits scans DNA for abnormalities. Upon binding of the UvrA(2)B(2) complex to a putative damaged site, the DNA wraps around one UvrB monomer. DNA wrap is dependent on ATP binding by UvrB and probably causes local melting of the DNA helix, facilitating insertion of UvrB beta-hairpin between the DNA strands. Then UvrB probes one DNA strand for the presence of a lesion. If a lesion is found the UvrA subunits dissociate and the UvrB-DNA preincision complex is formed. This complex is subsequently bound by UvrC and the second UvrB is released. If no lesion is found, the DNA wraps around the other UvrB subunit that will check the other stand for damage. This chain is UvrABC system protein B, found in Listeria monocytogenes serotype 4b (strain F2365).